The sequence spans 247 residues: MLIIPAIDLKDGHCVRLKQGLMEDATVFSEDPGAMARHWVDQGGKRLHLVDLNGAFAGKPVNEGAIKAIVKAVGNDIPIQLGGGIRDLDTIERYLDDGISYVIVGTAAVKSPGFLHEACYAFPGQIMVGLDAKDGKVAVDGWSKLTGHDVIDLAKKFEDYGVEAVVYTDIGRDGMLTGVNIEATVALAQALTIPVIASGGVTNLDDVRRLAEVESEGIIGAITGRAIYEGTLNFTEAQALADELSQI.

D8 serves as the catalytic Proton acceptor. D131 (proton donor) is an active-site residue.

The protein belongs to the HisA/HisF family.

It localises to the cytoplasm. It catalyses the reaction 1-(5-phospho-beta-D-ribosyl)-5-[(5-phospho-beta-D-ribosylamino)methylideneamino]imidazole-4-carboxamide = 5-[(5-phospho-1-deoxy-D-ribulos-1-ylimino)methylamino]-1-(5-phospho-beta-D-ribosyl)imidazole-4-carboxamide. Its pathway is amino-acid biosynthesis; L-histidine biosynthesis; L-histidine from 5-phospho-alpha-D-ribose 1-diphosphate: step 4/9. The polypeptide is 1-(5-phosphoribosyl)-5-[(5-phosphoribosylamino)methylideneamino] imidazole-4-carboxamide isomerase (Methylobacillus flagellatus (strain ATCC 51484 / DSM 6875 / VKM B-1610 / KT)).